Consider the following 106-residue polypeptide: Large ribosomal subunit protein bL21 (106 aa).

This sequence belongs to the bacterial ribosomal protein bL21 family. As to quaternary structure, part of the 50S ribosomal subunit. Contacts protein L20.

This protein binds to 23S rRNA in the presence of protein L20. This Streptomyces coelicolor (strain ATCC BAA-471 / A3(2) / M145) protein is Large ribosomal subunit protein bL21.